The primary structure comprises 146 residues: Snaclec coagulation factor X-activating enzyme light chain 1 (146 aa).

The signal sequence occupies residues 1-23 (MGRFISVSFGCLVVFLSLSGTEA). C27 and C38 are joined by a disulfide. One can recognise a C-type lectin domain in the interval 34-145 (YEQHCYKGFN…CNFIAPVVCK (112 aa)). N-linked (GlcNAc...) (complex) asparagine glycosylation is present at N47. Cystine bridges form between C55-C144 and C121-C136.

This sequence belongs to the snaclec family. Heterotrimer; disulfide-linked. The heterotrimer consists of 1 heavy chain (a metalloproteinase) and 2 light chains: LC1 and LC2. Post-translationally, N-glycosylated; probably required for conformation. Removal of easily accessible sugars does not change its functional capacity, but removal of the core sugars with N-glycanase causes a virtually complete loss of enzyme activity, apparently as a result of major conformational changes in the molecule. Not O-glycosylated. In terms of tissue distribution, expressed by the venom gland.

The protein resides in the secreted. Functionally, regulatory subunit of the blood coagulation factor X- and IX-activating enzyme. The enzyme activates coagulation factor X (F10) by cleaving the Arg-Ile bond and is also able to activate coagulation factor IX (F9) and protein S (PROS1) by specific cleavage of Arg-Ile and Arg-Val bonds. May serve as an exosite by which the enzyme recognizes and binds to the Gla domain of factor X (F10) and factor IX (F9) in a calcium-dependent manner. The protein is Snaclec coagulation factor X-activating enzyme light chain 1 (LC1) of Daboia siamensis (Eastern Russel's viper).